Consider the following 354-residue polypeptide: Arginase-2, mitochondrial (354 aa).

The transit peptide at 1–22 directs the protein to the mitochondrion; the sequence is MSLRSHLSRLLRTQVHSVRKKS. His-120, Asp-143, His-145, and Asp-147 together coordinate Mn(2+). Substrate is bound by residues 145–149, 156–158, and Asp-202; these read HADIN and SGN. Asp-251 and Asp-253 together coordinate Mn(2+). Residues Thr-265 and Glu-296 each coordinate substrate. A disordered region spans residues 332-354; the sequence is IVYDQLPTPSSPDESESEERVRI.

The protein belongs to the arginase family. In terms of assembly, homotrimer. It depends on Mn(2+) as a cofactor.

The protein resides in the mitochondrion. It catalyses the reaction L-arginine + H2O = urea + L-ornithine. It functions in the pathway nitrogen metabolism; urea cycle; L-ornithine and urea from L-arginine: step 1/1. In terms of biological role, may play a role in the regulation of extra-urea cycle arginine metabolism and also in down-regulation of nitric oxide synthesis. Extrahepatic arginase functions to regulate L-arginine bioavailability to nitric oxid synthase (NOS). Arginine metabolism is a critical regulator of innate and adaptive immune responses. Seems to be involved in negative regulation of the survival capacity of activated T cells. May suppress inflammation-related signaling in asthmatic airway epithelium. May play a role in promoting prenatal immune suppression. Regulates RPS6KB1 signaling, which promotes endothelial cell senescence and inflammation and implicates NOS3/eNOS dysfunction. Can inhibit endothelial autophagy independently of its enzymatic activity implicating mTORC2 signaling. Involved in vascular smooth muscle cell senescence and apoptosis independently of its enzymatic activity. This is Arginase-2, mitochondrial (ARG2) from Bos taurus (Bovine).